Consider the following 537-residue polypeptide: CTP synthase (537 aa).

The amidoligase domain stretch occupies residues 1–267 (MTKYIFVTGG…DQIVCDHLKL (267 aa)). Residue Ser13 participates in CTP binding. Ser13 lines the UTP pocket. ATP is bound at residue 14–19 (SIGKGI). Tyr54 is an L-glutamine binding site. Asp71 is an ATP binding site. Mg(2+) contacts are provided by Asp71 and Glu141. CTP contacts are provided by residues 148–150 (DIE), 188–193 (KTKPTQ), and Lys224. UTP-binding positions include 188-193 (KTKPTQ) and Lys224. Residue 240–242 (RDV) coordinates ATP. The region spanning 292–535 (RIALVGKYVE…VTAAVKNKNQ (244 aa)) is the Glutamine amidotransferase type-1 domain. Gly354 serves as a coordination point for L-glutamine. Cys381 serves as the catalytic Nucleophile; for glutamine hydrolysis. Residues 382–385 (LGMQ), Glu405, and Arg463 contribute to the L-glutamine site. Catalysis depends on residues His508 and Glu510.

Belongs to the CTP synthase family. Homotetramer.

The enzyme catalyses UTP + L-glutamine + ATP + H2O = CTP + L-glutamate + ADP + phosphate + 2 H(+). It carries out the reaction L-glutamine + H2O = L-glutamate + NH4(+). It catalyses the reaction UTP + NH4(+) + ATP = CTP + ADP + phosphate + 2 H(+). Its pathway is pyrimidine metabolism; CTP biosynthesis via de novo pathway; CTP from UDP: step 2/2. Allosterically activated by GTP, when glutamine is the substrate; GTP has no effect on the reaction when ammonia is the substrate. The allosteric effector GTP functions by stabilizing the protein conformation that binds the tetrahedral intermediate(s) formed during glutamine hydrolysis. Inhibited by the product CTP, via allosteric rather than competitive inhibition. In terms of biological role, catalyzes the ATP-dependent amination of UTP to CTP with either L-glutamine or ammonia as the source of nitrogen. Regulates intracellular CTP levels through interactions with the four ribonucleotide triphosphates. This Streptococcus equi subsp. equi (strain 4047) protein is CTP synthase.